We begin with the raw amino-acid sequence, 281 residues long: Probable endonuclease 4 (281 aa).

Zn(2+) is bound by residues histidine 69, histidine 109, glutamate 145, aspartate 179, histidine 182, histidine 216, aspartate 229, histidine 231, and glutamate 261.

It belongs to the AP endonuclease 2 family. Zn(2+) serves as cofactor.

It catalyses the reaction Endonucleolytic cleavage to 5'-phosphooligonucleotide end-products.. Endonuclease IV plays a role in DNA repair. It cleaves phosphodiester bonds at apurinic or apyrimidinic (AP) sites, generating a 3'-hydroxyl group and a 5'-terminal sugar phosphate. This chain is Probable endonuclease 4, found in Aeromonas hydrophila subsp. hydrophila (strain ATCC 7966 / DSM 30187 / BCRC 13018 / CCUG 14551 / JCM 1027 / KCTC 2358 / NCIMB 9240 / NCTC 8049).